The chain runs to 381 residues: MTLVFGSSCRLAVTLIFAFVSVFVFCEYVIYYLVILRCSWPLLEIEDSHSPLRALFLSDTHLLGAIRGHWLDKLRREWQMERAFQTSMWLLNPEVVFILGDVFDEGKWSTSQDWEDDVRRFKRIFRHPVDTKLVVLVGNHDIGFHHEMTKQKLERFEQVFNVTSARILTIKGVNFLLVNSVALHGDHCPICQHVEEELQKLSHALNCSIQGAQHNGQCKNAARFAPAAPVLLQHYPLYRVSDAMCTGVDTAPLDEQYLLFQERYDVISKNASKKLLWWFKPRLILSGHTHNGCEVLHEKLYPEISVPSFSWRNRNNPSFVLGTFSQSEFQLSKCFLPEERTVLVVYCSSCLIIALITLIHLKMFRNSLQFTNNLIGKHKTL.

The helical transmembrane segment at 15–35 threads the bilayer; it reads LIFAFVSVFVFCEYVIYYLVI. Residues aspartate 59, aspartate 101, asparagine 139, histidine 234, histidine 288, and histidine 290 each contribute to the a divalent metal cation site. The helical transmembrane segment at 341–361 threads the bilayer; sequence TVLVVYCSSCLIIALITLIHL. A Di-lysine motif motif is present at residues 377-381; the sequence is KHKTL.

Belongs to the metallophosphoesterase superfamily. MPPE1 family. It depends on Mn(2+) as a cofactor.

The protein resides in the endoplasmic reticulum-Golgi intermediate compartment membrane. Metallophosphoesterase that catalyzes the removal of a side-chain ethanolamine-phosphate (EtNP) from the second mannose of the GPI-anchor protein intermediate. Participates in the glycan remodeling steps of GPI-anchor maturation to allow an efficient transport of GPI-anchor proteins from the endoplasmic reticulum to the Golgi. The polypeptide is Metallophosphoesterase 1 (Danio rerio (Zebrafish)).